Reading from the N-terminus, the 192-residue chain is MRKAHIFRQTKETAIDMEIDLDGSGVYQIETPVGFLNHMMESFSKHSFIDIKLKAEGDIDVSYHHLVEDVGIVLGQAISKALGDKSGINRYGFAILPMDEALVLCSLDFSGRGLFFYDRKDLRGKITEFDFELIWEFIKGFALESKATVHIKILDGHILHHIAECSIKSLAFSVRQAVAKQDKGILSTKGLL.

Belongs to the imidazoleglycerol-phosphate dehydratase family.

It is found in the cytoplasm. It carries out the reaction D-erythro-1-(imidazol-4-yl)glycerol 3-phosphate = 3-(imidazol-4-yl)-2-oxopropyl phosphate + H2O. It functions in the pathway amino-acid biosynthesis; L-histidine biosynthesis; L-histidine from 5-phospho-alpha-D-ribose 1-diphosphate: step 6/9. In Hydrogenobaculum sp. (strain Y04AAS1), this protein is Imidazoleglycerol-phosphate dehydratase.